The sequence spans 549 residues: Glucose-6-phosphate isomerase (549 aa).

Lys-80, Lys-228, and Lys-234 each carry N6-acetyllysine. Catalysis depends on Glu-355, which acts as the Proton donor. Residues His-386 and Lys-514 contribute to the active site.

This sequence belongs to the GPI family.

The protein resides in the cytoplasm. It carries out the reaction alpha-D-glucose 6-phosphate = beta-D-fructose 6-phosphate. Its pathway is carbohydrate biosynthesis; gluconeogenesis. The protein operates within carbohydrate degradation; glycolysis; D-glyceraldehyde 3-phosphate and glycerone phosphate from D-glucose: step 2/4. In terms of biological role, catalyzes the reversible isomerization of glucose-6-phosphate to fructose-6-phosphate. In Shigella boydii serotype 4 (strain Sb227), this protein is Glucose-6-phosphate isomerase.